We begin with the raw amino-acid sequence, 138 residues long: uncharacterized protein (138 aa).

Transmembrane regions (helical) follow at residues 12–32, 62–82, and 111–131; these read LHFL…VLPI, LIAV…FSVL, and FHWV…LICS.

The protein resides in the cell membrane. This is an uncharacterized protein from Haemophilus influenzae (strain ATCC 51907 / DSM 11121 / KW20 / Rd).